Here is a 190-residue protein sequence, read N- to C-terminus: Sec-independent protein translocase protein TatB (190 aa).

A helical membrane pass occupies residues 2–22 (LPDIGGTELLVIAAVALIVVG). Residues 130–190 (IVSKPARKPP…KASTNSDITS (61 aa)) are disordered. The segment covering 134 to 144 (PARKPPAKKAA) has biased composition (basic residues). Residues 145-163 (AKPAAKAELVSKPKASAKA) are compositionally biased toward low complexity.

Belongs to the TatB family. In terms of assembly, the Tat system comprises two distinct complexes: a TatABC complex, containing multiple copies of TatA, TatB and TatC subunits, and a separate TatA complex, containing only TatA subunits. Substrates initially bind to the TatABC complex, which probably triggers association of the separate TatA complex to form the active translocon.

It is found in the cell inner membrane. Functionally, part of the twin-arginine translocation (Tat) system that transports large folded proteins containing a characteristic twin-arginine motif in their signal peptide across membranes. Together with TatC, TatB is part of a receptor directly interacting with Tat signal peptides. TatB may form an oligomeric binding site that transiently accommodates folded Tat precursor proteins before their translocation. The chain is Sec-independent protein translocase protein TatB from Caulobacter sp. (strain K31).